We begin with the raw amino-acid sequence, 411 residues long: Kelch domain-containing protein 10 (411 aa).

6 Kelch repeats span residues 72 to 133, 135 to 186, 187 to 239, 240 to 288, 296 to 342, and 345 to 388; these read NLYV…LHGH, LLVF…IIHG, FLYV…HDGQ, RIYV…RRCH, EVFI…AVTP, and CMYI…YFPH.

This sequence belongs to the KLHDC10 family. In terms of assembly, component of a CRL2 E3 ubiquitin-protein ligase complex, also named ECS (Elongin BC-CUL2/5-SOCS-box protein) complex, composed of CUL2, Elongin BC (ELOB and ELOC), RBX1 and substrate-specific adapter KLHDC10.

It functions in the pathway protein modification; protein ubiquitination. Substrate-recognition component of a Cul2-RING (CRL2) E3 ubiquitin-protein ligase complex of the DesCEND (destruction via C-end degrons) pathway, which recognizes a C-degron located at the extreme C terminus of target proteins, leading to their ubiquitination and degradation. The C-degron recognized by the DesCEND pathway is usually a motif of less than ten residues and can be present in full-length proteins, truncated proteins or proteolytically cleaved forms. The CRL2(KLHDC10) complex specifically recognizes proteins with a proline-glycine (Pro-Gly) or an alanine tail (CAT tail) at the C-terminus, leading to their ubiquitination and degradation. The CRL2(KLHDC10) complex is involved in the ribosome-associated quality control (RQC) pathway, which mediates the extraction of incompletely synthesized nascent chains from stalled ribosomes: CRL2(KLHDC10) acts downstream of NEMF and recognizes CAT tails associated with stalled nascent chains, leading to their ubiquitination and degradation. In Xenopus tropicalis (Western clawed frog), this protein is Kelch domain-containing protein 10.